Reading from the N-terminus, the 383-residue chain is Cobalt-precorrin-5B C(1)-methyltransferase (383 aa).

The segment at 1–24 is disordered; that stretch reads MQPSARRPFDLATPAPNGLRRGRT.

This sequence belongs to the CbiD family.

It carries out the reaction Co-precorrin-5B + S-adenosyl-L-methionine = Co-precorrin-6A + S-adenosyl-L-homocysteine. The protein operates within cofactor biosynthesis; adenosylcobalamin biosynthesis; cob(II)yrinate a,c-diamide from sirohydrochlorin (anaerobic route): step 6/10. In terms of biological role, catalyzes the methylation of C-1 in cobalt-precorrin-5B to form cobalt-precorrin-6A. The protein is Cobalt-precorrin-5B C(1)-methyltransferase of Ralstonia nicotianae (strain ATCC BAA-1114 / GMI1000) (Ralstonia solanacearum).